The primary structure comprises 303 residues: Probable cell division protein WhiA (303 aa).

Positions 272-303 (SIQQLADSLSTPLTKSGVNHRLRKINKIADEL) form a DNA-binding region, H-T-H motif.

The protein belongs to the WhiA family.

Involved in cell division and chromosome segregation. This chain is Probable cell division protein WhiA, found in Streptococcus pneumoniae serotype 4 (strain ATCC BAA-334 / TIGR4).